The following is a 473-amino-acid chain: Argininosuccinate lyase (473 aa).

It belongs to the lyase 1 family. Argininosuccinate lyase subfamily.

It localises to the cytoplasm. It carries out the reaction 2-(N(omega)-L-arginino)succinate = fumarate + L-arginine. It participates in amino-acid biosynthesis; L-arginine biosynthesis; L-arginine from L-ornithine and carbamoyl phosphate: step 3/3. This Bordetella pertussis (strain Tohama I / ATCC BAA-589 / NCTC 13251) protein is Argininosuccinate lyase.